A 153-amino-acid polypeptide reads, in one-letter code: Large ribosomal subunit protein uL15 (153 aa).

A disordered region spans residues Arg-21–Ser-40. Positions Ile-23 to Ile-35 are enriched in gly residues.

The protein belongs to the universal ribosomal protein uL15 family. As to quaternary structure, part of the 50S ribosomal subunit.

Functionally, binds to the 23S rRNA. The protein is Large ribosomal subunit protein uL15 of Rickettsia canadensis (strain McKiel).